We begin with the raw amino-acid sequence, 320 residues long: MLTRSWKIILSTVFISTFLLVGLLNHQWLKETEFPQKPRQLYTVIAEYGSRLYNYQARLRMPKEQQELLKKESQTLENNFREILFLIEQIDVLKALLKDMKDGVHNHSLPVHRDAVQDQATTDVLDEEMSNLVHYVLKKFRGDQIQLADYALKSAGASVIEAGTSESYKNNKAKLYWHGIGFLNYEMPPDMILQPDVHPGKCWAFPGSQGHILIKLARKIIPTAVTMEHISEKVSPSGNISSAPKEFSVYGVMKKCEGEEIFLGQFIYNKMEATIQTFELQNEASESLLCVKLQILSNWGHPKYTCLYRFRVHGIPSDYT.

Residues 1 to 6 (MLTRSW) lie on the Nuclear side of the membrane. Residues 7 to 29 (KIILSTVFISTFLLVGLLNHQWL) traverse the membrane as a helical segment. Residues 30–320 (KETEFPQKPR…RVHGIPSDYT (291 aa)) lie on the Perinuclear space side of the membrane. Positions 63–102 (KEQQELLKKESQTLENNFREILFLIEQIDVLKALLKDMKD) form a coiled coil. Residues 156–317 (GASVIEAGTS…YRFRVHGIPS (162 aa)) form the SUN domain.

In terms of assembly, self-associates. Interacts with SYNE1 and SPAG4/SUN4. Proposed to form a spermatogenesis-specific LINC complex with SYNE1 during sperm head formation possibly implicating a SUN domain-based heterotrimer with SPAG4/SUN4 associating with SYNE1. Can interact with SYNE3; the interaction is questioned by missing colocalization in spermatids. Specifically expressed in testis (at protein level).

It localises to the membrane. The protein resides in the nucleus envelope. The protein localises to the nucleus inner membrane. Functionally, as a probable component of the LINC (LInker of Nucleoskeleton and Cytoskeleton) complex, involved in the connection between the nuclear lamina and the cytoskeleton. The nucleocytoplasmic interactions established by the LINC complex play an important role in the transmission of mechanical forces across the nuclear envelope and in nuclear movement and positioning. May be involved in nuclear remodeling during sperm head formation in spermatogenesis. A probable SUN3:SYNE1 LINC complex may tether spermatid nuclei to posterior cytoskeletal structures such as the manchette. The chain is SUN domain-containing protein 3 (Sun3) from Mus musculus (Mouse).